Here is a 39-residue protein sequence, read N- to C-terminus: Photosystem II reaction center protein L (39 aa).

A helical transmembrane segment spans residues 18 to 38 (SLYLGLLLVAVLGILFSSYFF).

The protein belongs to the PsbL family. PSII is composed of 1 copy each of membrane proteins PsbA, PsbB, PsbC, PsbD, PsbE, PsbF, PsbH, PsbI, PsbJ, PsbK, PsbL, PsbM, PsbT, PsbX, PsbY, PsbZ, Psb30/Ycf12, peripheral proteins PsbO, CyanoQ (PsbQ), PsbU, PsbV and a large number of cofactors. It forms dimeric complexes.

The protein localises to the cellular thylakoid membrane. Functionally, one of the components of the core complex of photosystem II (PSII). PSII is a light-driven water:plastoquinone oxidoreductase that uses light energy to abstract electrons from H(2)O, generating O(2) and a proton gradient subsequently used for ATP formation. It consists of a core antenna complex that captures photons, and an electron transfer chain that converts photonic excitation into a charge separation. This subunit is found at the monomer-monomer interface and is required for correct PSII assembly and/or dimerization. The protein is Photosystem II reaction center protein L of Rippkaea orientalis (strain PCC 8801 / RF-1) (Cyanothece sp. (strain PCC 8801)).